We begin with the raw amino-acid sequence, 205 residues long: Cytochrome c oxidase subunit 2 (205 aa).

Cu cation-binding residues include His-115, Cys-150, Glu-152, Cys-154, His-158, and Met-161. Residue Glu-152 coordinates Mg(2+).

It belongs to the cytochrome c oxidase subunit 2 family. In terms of assembly, component of the cytochrome c oxidase (complex IV, CIV), a multisubunit enzyme composed of a catalytic core of 3 subunits and several supernumerary subunits. The complex exists as a monomer or a dimer and forms supercomplexes (SCs) in the inner mitochondrial membrane with ubiquinol-cytochrome c oxidoreductase (cytochrome b-c1 complex, complex III, CIII). Cu cation is required as a cofactor.

It is found in the mitochondrion inner membrane. It carries out the reaction 4 Fe(II)-[cytochrome c] + O2 + 8 H(+)(in) = 4 Fe(III)-[cytochrome c] + 2 H2O + 4 H(+)(out). Its function is as follows. Component of the cytochrome c oxidase, the last enzyme in the mitochondrial electron transport chain which drives oxidative phosphorylation. The respiratory chain contains 3 multisubunit complexes succinate dehydrogenase (complex II, CII), ubiquinol-cytochrome c oxidoreductase (cytochrome b-c1 complex, complex III, CIII) and cytochrome c oxidase (complex IV, CIV), that cooperate to transfer electrons derived from NADH and succinate to molecular oxygen, creating an electrochemical gradient over the inner membrane that drives transmembrane transport and the ATP synthase. Cytochrome c oxidase is the component of the respiratory chain that catalyzes the reduction of oxygen to water. Electrons originating from reduced cytochrome c in the intermembrane space (IMS) are transferred via the dinuclear copper A center (CU(A)) of subunit 2 and heme A of subunit 1 to the active site in subunit 1, a binuclear center (BNC) formed by heme A3 and copper B (CU(B)). The BNC reduces molecular oxygen to 2 water molecules using 4 electrons from cytochrome c in the IMS and 4 protons from the mitochondrial matrix. The polypeptide is Cytochrome c oxidase subunit 2 (COII) (Paramecium tetraurelia).